A 233-amino-acid polypeptide reads, in one-letter code: Orotidine 5'-phosphate decarboxylase (233 aa).

Residues Asp13, Lys35, 62-71 (DLKFHDIPNT), Thr122, Arg182, Gln191, Gly211, and Arg212 contribute to the substrate site. Residue Lys64 is the Proton donor of the active site.

This sequence belongs to the OMP decarboxylase family. Type 1 subfamily. As to quaternary structure, homodimer.

It carries out the reaction orotidine 5'-phosphate + H(+) = UMP + CO2. It functions in the pathway pyrimidine metabolism; UMP biosynthesis via de novo pathway; UMP from orotate: step 2/2. Its function is as follows. Catalyzes the decarboxylation of orotidine 5'-monophosphate (OMP) to uridine 5'-monophosphate (UMP). In Pseudomonas putida (strain W619), this protein is Orotidine 5'-phosphate decarboxylase.